Reading from the N-terminus, the 242-residue chain is ADP-dependent L-serine kinase SerK (242 aa).

Glu30 is a catalytic residue. ADP contacts are provided by Ser43, Ile49, Trp51, and Lys52. Val68 lines the O-phospho-L-serine pocket. Residues Asp69, Gly70, His71, His72, and Arg73 each contribute to the ADP site. Mg(2+) is bound at residue Asp69. Residues Gly70, His71, and His72 each coordinate O-phospho-L-serine. 4 residues coordinate O-phospho-L-serine: Trp102, Lys221, Thr223, and His225.

Belongs to the SerK family. Mg(2+) is required as a cofactor.

It carries out the reaction L-serine + ADP = O-phospho-L-serine + AMP + H(+). It functions in the pathway amino-acid biosynthesis; L-cysteine biosynthesis; L-cysteine from L-serine: step 1/2. Functionally, free serine kinase that uses ADP to phosphorylate L-serine to yield O-phospho-L-serine and AMP. The protein is ADP-dependent L-serine kinase SerK of Thermococcus kodakarensis (strain ATCC BAA-918 / JCM 12380 / KOD1) (Pyrococcus kodakaraensis (strain KOD1)).